A 128-amino-acid polypeptide reads, in one-letter code: Small ribosomal subunit protein uS11 (128 aa).

This sequence belongs to the universal ribosomal protein uS11 family. Part of the 30S ribosomal subunit. Interacts with proteins S7 and S18. Binds to IF-3.

Its function is as follows. Located on the platform of the 30S subunit, it bridges several disparate RNA helices of the 16S rRNA. Forms part of the Shine-Dalgarno cleft in the 70S ribosome. The chain is Small ribosomal subunit protein uS11 from Desulforudis audaxviator (strain MP104C).